A 124-amino-acid chain; its full sequence is MADLTKLVDELSSLTVLEAAELAKLLEEKWGVSAAAAVAVAAAPAGAAAAAVEEQTEFTVVLAAAGEKKIEVIKEVRAITGLGLKEAKDLVEGAPKPVKEAVSKDEAEKLKAQLEKAGAKVELK.

The protein belongs to the bacterial ribosomal protein bL12 family. As to quaternary structure, homodimer. Part of the ribosomal stalk of the 50S ribosomal subunit. Forms a multimeric L10(L12)X complex, where L10 forms an elongated spine to which 2 to 4 L12 dimers bind in a sequential fashion. Binds GTP-bound translation factors.

In terms of biological role, forms part of the ribosomal stalk which helps the ribosome interact with GTP-bound translation factors. Is thus essential for accurate translation. The chain is Large ribosomal subunit protein bL12 from Xanthobacter autotrophicus (strain ATCC BAA-1158 / Py2).